The chain runs to 401 residues: Probable tRNA sulfurtransferase (401 aa).

The region spanning E60 to D165 is the THUMP domain. ATP contacts are provided by residues M183–L184, H208–F209, R265, G287, and Q296.

It belongs to the ThiI family.

Its subcellular location is the cytoplasm. It catalyses the reaction [ThiI sulfur-carrier protein]-S-sulfanyl-L-cysteine + a uridine in tRNA + 2 reduced [2Fe-2S]-[ferredoxin] + ATP + H(+) = [ThiI sulfur-carrier protein]-L-cysteine + a 4-thiouridine in tRNA + 2 oxidized [2Fe-2S]-[ferredoxin] + AMP + diphosphate. The catalysed reaction is [ThiS sulfur-carrier protein]-C-terminal Gly-Gly-AMP + S-sulfanyl-L-cysteinyl-[cysteine desulfurase] + AH2 = [ThiS sulfur-carrier protein]-C-terminal-Gly-aminoethanethioate + L-cysteinyl-[cysteine desulfurase] + A + AMP + 2 H(+). It functions in the pathway cofactor biosynthesis; thiamine diphosphate biosynthesis. Its function is as follows. Catalyzes the ATP-dependent transfer of a sulfur to tRNA to produce 4-thiouridine in position 8 of tRNAs, which functions as a near-UV photosensor. Also catalyzes the transfer of sulfur to the sulfur carrier protein ThiS, forming ThiS-thiocarboxylate. This is a step in the synthesis of thiazole, in the thiamine biosynthesis pathway. The sulfur is donated as persulfide by IscS. The chain is Probable tRNA sulfurtransferase from Geobacillus kaustophilus (strain HTA426).